Reading from the N-terminus, the 357-residue chain is S-adenosylmethionine:tRNA ribosyltransferase-isomerase (357 aa).

The protein belongs to the QueA family. As to quaternary structure, monomer.

Its subcellular location is the cytoplasm. The enzyme catalyses 7-aminomethyl-7-carbaguanosine(34) in tRNA + S-adenosyl-L-methionine = epoxyqueuosine(34) in tRNA + adenine + L-methionine + 2 H(+). It participates in tRNA modification; tRNA-queuosine biosynthesis. In terms of biological role, transfers and isomerizes the ribose moiety from AdoMet to the 7-aminomethyl group of 7-deazaguanine (preQ1-tRNA) to give epoxyqueuosine (oQ-tRNA). In Proteus mirabilis (strain HI4320), this protein is S-adenosylmethionine:tRNA ribosyltransferase-isomerase.